The following is a 907-amino-acid chain: Protein translocase subunit SecA (907 aa).

Residues Q86, 104–108 (GEGKT), and D511 contribute to the ATP site. 2 stretches are compositionally biased toward basic and acidic residues: residues 838–856 (AQEE…HESV) and 869–888 (EEAP…KRND). The segment at 838–907 (AQEEWKESMS…YKQCHGKVVD (70 aa)) is disordered. Zn(2+)-binding residues include C890, C892, C901, and H902. The segment covering 896 to 907 (KKYKQCHGKVVD) has biased composition (basic residues).

The protein belongs to the SecA family. Monomer and homodimer. Part of the essential Sec protein translocation apparatus which comprises SecA, SecYEG and auxiliary proteins SecDF-YajC and YidC. Requires Zn(2+) as cofactor.

It is found in the cell inner membrane. It localises to the cytoplasm. It catalyses the reaction ATP + H2O + cellular proteinSide 1 = ADP + phosphate + cellular proteinSide 2.. Functionally, part of the Sec protein translocase complex. Interacts with the SecYEG preprotein conducting channel. Has a central role in coupling the hydrolysis of ATP to the transfer of proteins into and across the cell membrane, serving both as a receptor for the preprotein-SecB complex and as an ATP-driven molecular motor driving the stepwise translocation of polypeptide chains across the membrane. The protein is Protein translocase subunit SecA of Francisella philomiragia subsp. philomiragia (strain ATCC 25017 / CCUG 19701 / FSC 153 / O#319-036).